The primary structure comprises 221 residues: uncharacterized protein (221 aa).

4 helical membrane-spanning segments follow: residues 30–50 (FGIF…LPLA), 62–82 (AGVV…LYWI), 144–164 (VWVF…VYVY), and 179–199 (ILDQ…LLYL).

The protein belongs to the DedA family.

The protein resides in the cell membrane. This is an uncharacterized protein from Bacillus subtilis (strain 168).